Consider the following 876-residue polypeptide: Probable LRR receptor-like protein kinase At1g51890 (876 aa).

A signal peptide spans 1-19 (MRFLSFLIFVFAVLGLVQA). Over 20-500 (QDQSGFISLD…TGKNSTNVVA (481 aa)) the chain is Extracellular. N-linked (GlcNAc...) asparagine glycosylation is found at asparagine 45, asparagine 90, asparagine 138, asparagine 177, asparagine 251, asparagine 259, asparagine 284, asparagine 290, asparagine 327, asparagine 335, asparagine 397, asparagine 412, and asparagine 417. LRR repeat units lie at residues 407 to 430 (QIIS…SKLT), 431 to 453 (HLRE…FSDM), and 455 to 476 (NLTL…ETLQ). N-linked (GlcNAc...) asparagine glycans are attached at residues asparagine 455, asparagine 460, asparagine 468, asparagine 481, and asparagine 494. Residues 501-521 (IAASVASVFAVLVILAIVFVV) form a helical membrane-spanning segment. Over 522–872 (IRKKQRTNEA…FSPSSASDFS (351 aa)) the chain is Cytoplasmic. Threonine 561 carries the post-translational modification Phosphothreonine. The Protein kinase domain maps to 570–842 (KNFERVLGKG…HVVMELNECL (273 aa)). ATP-binding positions include 576–584 (LGKGGFGTV) and lysine 597. Phosphotyrosine is present on tyrosine 642. Aspartate 694 serves as the catalytic Proton acceptor. A phosphothreonine mark is found at threonine 729 and threonine 734. Residue tyrosine 742 is modified to Phosphotyrosine.

The protein belongs to the protein kinase superfamily. Ser/Thr protein kinase family.

It localises to the cell membrane. It carries out the reaction L-seryl-[protein] + ATP = O-phospho-L-seryl-[protein] + ADP + H(+). It catalyses the reaction L-threonyl-[protein] + ATP = O-phospho-L-threonyl-[protein] + ADP + H(+). This chain is Probable LRR receptor-like protein kinase At1g51890, found in Arabidopsis thaliana (Mouse-ear cress).